Here is an 885-residue protein sequence, read N- to C-terminus: Leucine--tRNA ligase (885 aa).

The 'HIGH' region signature appears at proline 48 to histidine 58. The 'KMSKS' region signature appears at threonine 639–serine 643. Lysine 642 is a binding site for ATP.

The protein belongs to the class-I aminoacyl-tRNA synthetase family.

It localises to the cytoplasm. The catalysed reaction is tRNA(Leu) + L-leucine + ATP = L-leucyl-tRNA(Leu) + AMP + diphosphate. This is Leucine--tRNA ligase from Bordetella pertussis (strain Tohama I / ATCC BAA-589 / NCTC 13251).